A 611-amino-acid chain; its full sequence is Aspartate--tRNA ligase, mitochondrial (611 aa).

Residues 1–30 constitute a mitochondrion transit peptide; the sequence is MVLSRLPACLLPLVGTKVSIQGWLVATSRQ. Glu-192 serves as a coordination point for L-aspartate. An aspartate region spans residues 216–219; it reads QQYK. Arg-238 is a binding site for L-aspartate. ATP-binding positions include 238–240 and Glu-502; that span reads RDE. Arg-509 is an L-aspartate binding site. 554 to 557 serves as a coordination point for ATP; the sequence is GFDR.

It belongs to the class-II aminoacyl-tRNA synthetase family. Type 1 subfamily.

The protein resides in the mitochondrion. It carries out the reaction tRNA(Asp) + L-aspartate + ATP = L-aspartyl-tRNA(Asp) + AMP + diphosphate. In Schizosaccharomyces pombe (strain 972 / ATCC 24843) (Fission yeast), this protein is Aspartate--tRNA ligase, mitochondrial (msd1).